We begin with the raw amino-acid sequence, 446 residues long: Glutamine synthetase (446 aa).

In terms of domain architecture, GS beta-grasp spans Glu18–Gly103. The GS catalytic domain maps to Pro110–Tyr446. Residues Glu134 and Glu136 each contribute to the Mg(2+) site. Position 186 (Glu186) interacts with ATP. Residues Glu191 and Glu198 each coordinate Mg(2+). L-glutamate-binding positions include Asn242–Gly243 and Gly243. His247 is a Mg(2+) binding site. Ser251 provides a ligand contact to ATP. Positions 300, 306, and 318 each coordinate L-glutamate. Residues Arg318 and Arg323 each contribute to the ATP site. A Mg(2+)-binding site is contributed by Glu335. Arg337 is an L-glutamate binding site.

This sequence belongs to the glutamine synthetase family. As to quaternary structure, oligomer of 12 subunits arranged in the form of two hexagons. In its feedback-inhibited form, interacts with TnrA in order to block its DNA-binding activity. The cofactor is Mg(2+).

It localises to the cytoplasm. The enzyme catalyses L-glutamate + NH4(+) + ATP = L-glutamine + ADP + phosphate + H(+). Inhibited by glutamine. Glutamine synthetase (GS) is an unusual multitasking protein that functions as an enzyme, a transcription coregulator, and a chaperone in ammonium assimilation and in the regulation of genes involved in nitrogen metabolism. It catalyzes the ATP-dependent biosynthesis of glutamine from glutamate and ammonia. Feedback-inhibited GlnA also interacts with and regulates the activity of the transcriptional regulator TnrA. During nitrogen limitation, TnrA is in its DNA-binding active state and turns on the transcription of genes required for nitrogen assimilation. Under conditions of nitrogen excess, feedback-inhibited GlnA forms a stable complex with TnrA, which inhibits its DNA-binding activity. In contrast, feedback-inhibited GlnA acts as a chaperone to stabilize the DNA-binding activity of GlnR, which represses the transcription of nitrogen assimilation genes. The protein is Glutamine synthetase of Staphylococcus epidermidis (strain ATCC 35984 / DSM 28319 / BCRC 17069 / CCUG 31568 / BM 3577 / RP62A).